A 510-amino-acid chain; its full sequence is NEDD8-activating enzyme E1 regulatory subunit (510 aa).

Ala2 is subject to N-acetylalanine. An N6-acetyllysine mark is found at Lys6 and Lys317. Residues 307-320 are interaction with UBA3; it reads DMIADSGKYIKLQN.

The protein belongs to the ubiquitin-activating E1 family. ULA1 subfamily. Heterodimer of UBA3 and NAE1. The complex binds NEDD8 and UBE2M. Binds APP and TP53BP2. Post-translationally, ubiquitinated by TRIP12, leading to its degradation by the proteasome.

It is found in the cell membrane. It functions in the pathway protein modification; protein neddylation. Binding of TP53BP2 to the regulatory subunit NAE1 decreases neddylation activity. In terms of biological role, regulatory subunit of the dimeric UBA3-NAE1 E1 enzyme. E1 activates NEDD8 by first adenylating its C-terminal glycine residue with ATP, thereafter linking this residue to the side chain of the catalytic cysteine, yielding a NEDD8-UBA3 thioester and free AMP. E1 finally transfers NEDD8 to the catalytic cysteine of UBE2M. Necessary for cell cycle progression through the S-M checkpoint. Overexpression of NAE1 causes apoptosis through deregulation of NEDD8 conjugation. The covalent attachment of NEDD8 to target proteins is known as 'neddylation' and the process is involved in the regulation of cell growth, viability and development. The protein is NEDD8-activating enzyme E1 regulatory subunit (NAE1) of Macaca fascicularis (Crab-eating macaque).